A 183-amino-acid chain; its full sequence is Ribosome-recycling factor (183 aa).

It belongs to the RRF family.

The protein localises to the cytoplasm. Responsible for the release of ribosomes from messenger RNA at the termination of protein biosynthesis. May increase the efficiency of translation by recycling ribosomes from one round of translation to another. The chain is Ribosome-recycling factor from Ureaplasma parvum serovar 3 (strain ATCC 27815 / 27 / NCTC 11736).